A 936-amino-acid polypeptide reads, in one-letter code: MSSSSSPFFHPPPQQVMDDTTQQSPSYSQNSNSPSQHTFESMEPAAGGSTSMRYSPSGSSEADNPTLGLFSAQASYPYSLRKRRPCLTKDEDLCFPITAATADETPQPTMKKFKLECLSPGEARDFSIEDESGTNLEAKMETTECEPEEEEAVEEEDQQDHINRLPEELLLKVFSFLPDKSLLACSSVSYRFNQISNSHEVWKELYCNLYDYRIPLFHPSHAKFEFREQSRWRDGNPWKESHRQLHHGVHVMKEPRVNLRSVNYRCFDQIEKAQSFLEEDEYREKLIFLHTGVHEPIDTILINTDVQIIGASDSRDITSSVVLEGSKNTALTFTDGSANAYFGFITVRFRADPVCRQQPQIAQQAQQMNHFYSILVTDKDAMPYIERCDITSKVGNGAAVCVKKSAAPKFKYCTVLDCENVGIYITDNATGHYEHCEIARNTLAGVWVKNHANPYFRKCTIHSGKDVGVFTFEHGQGYFEKCNIHSNRISGIEVKNSANPVVIRCEVHHGYTGGIYVHERGRGQFMENRIYANAYAGIWITSHSDPTIRKNEIFTGQQGGVYIFGEGRGLIEQNNIYGNALAGIQIRSQSDPIVRLNKIHDGLHGGIYVHEKGRGLIEENEVYGNTLAGIWVTTGSSPILRKNRIHSGKQVGVYFYDQGHGLLEENDIFNHLYSGVQIRTGSNPKITRNKIWGGQNGGVLVYNGGKGCLEDNEIFDNAMAGVWIKTDSEPTLRRNKIYDGRDGGVCIFNRGKGLLEDNEIFRNAQAGVLISTESNPTLRRNRVFDGKSAGIEITNGATATLEENQLFRNKYGGLCVATGVTPVQRGNRIYDNHDTISRAIKTGLCLFKVSSNNSFPMHNFYRCTTCNTTERNAICTNCIRTCHRGHSVELVRFDRFFCDCGAGTLERHCHLQNVPRDNDTVYDSATPISTETGTEI.

A disordered region spans residues Met1 to Leu67. The span at Gln22 to Gln36 shows a compositional bias: low complexity. Polar residues predominate over residues Gly48–Asp63. The F-box domain maps to Gln159–Leu205. PbH1 repeat units lie at residues Ser405–Asp427, Asn428–Asn450, His451–Glu473, His474–Asn496, Ser497–Glu519, Arg520–Ser542, His543–Gly565, Glu566–Ser588, Gln589–Glu611, Lys612–Thr634, Gly635–Asp657, Gln658–Thr680, Gly681–Asn703, Gly704–Thr726, Asp727–Asn749, Arg750–Thr772, Glu773–Asn795, and Gly796–Thr818. A UBR-type zinc finger spans residues Gly843 to Val914.

As to quaternary structure, component of a SCF ubiquitin ligase complex. Interacts (via F-box) with skr-1. Interacts with blmp-1; the interaction targets blmp-1 for proteasomal degradation. Interacts with ced-9; the interaction inhibits ced-9 activity, either directly or indirectly. In terms of tissue distribution, in mid-embryogenesis, expression is most prominent in epidermal and intestinal cells. By the 1.5-fold stage of embryogenesis, expression is additionally detected in neurons and other cells. During larval and adult stages, highest expression is seen in epidermal seam cells and hypodermis. In larvae, strongly expressed in the P epidermal blast cells and descendents that give rise to the vulva and weakly expressed in the somatic gonad, including the gonadoblasts, the anchor cell and the distal tip cells. Some weak expression also seen in adult spermatheca and uterus. In the musculature, expressed in the pharynx, anal depressor, sex muscles, and body wall muscles. Detected in neurons of the head, tail, ventral cord and periphery. Also expressed in the embryonic tail spike cell.

Its subcellular location is the nucleus. It localises to the cytoplasm. Its pathway is protein modification; protein ubiquitination. Substrate recognition component of a SCF (SKP1-CUL1-F-box protein) E3 ubiquitin-protein ligase complex which mediates the ubiquitination and subsequent proteasomal degradation of target proteins including blmp-1. Promotes ubiquitination of snail family proteins ces-1, scrt-1 and snai-1. Heterochronic protein which is required for the timing of gonad development and epidermal seam cell differentiation. Regulates tail-spike cell death through inhibition of the apoptosis regulator ced-9. The polypeptide is F-box protein dre-1 (Caenorhabditis elegans).